Here is a 286-residue protein sequence, read N- to C-terminus: Polyamine aminopropyltransferase (286 aa).

The 234-residue stretch at 5–238 folds into the PABS domain; it reads PLWHETLHDH…GIMTFAWASD (234 aa). Position 33 (glutamine 33) interacts with S-methyl-5'-thioadenosine. Residues histidine 64 and aspartate 88 each contribute to the spermidine site. S-methyl-5'-thioadenosine-binding positions include glutamate 108 and 140–141; that span reads DG. Aspartate 158 acts as the Proton acceptor in catalysis. 158 to 161 serves as a coordination point for spermidine; it reads DCTD. Proline 165 is an S-methyl-5'-thioadenosine binding site.

Belongs to the spermidine/spermine synthase family. As to quaternary structure, homodimer or homotetramer.

It localises to the cytoplasm. It carries out the reaction S-adenosyl 3-(methylsulfanyl)propylamine + putrescine = S-methyl-5'-thioadenosine + spermidine + H(+). It participates in amine and polyamine biosynthesis; spermidine biosynthesis; spermidine from putrescine: step 1/1. Its function is as follows. Catalyzes the irreversible transfer of a propylamine group from the amino donor S-adenosylmethioninamine (decarboxy-AdoMet) to putrescine (1,4-diaminobutane) to yield spermidine. This is Polyamine aminopropyltransferase from Klebsiella pneumoniae subsp. pneumoniae (strain ATCC 700721 / MGH 78578).